Here is a 414-residue protein sequence, read N- to C-terminus: Esterase FrsA (414 aa).

This sequence belongs to the FrsA family.

It catalyses the reaction a carboxylic ester + H2O = an alcohol + a carboxylate + H(+). In terms of biological role, catalyzes the hydrolysis of esters. The sequence is that of Esterase FrsA from Escherichia coli O17:K52:H18 (strain UMN026 / ExPEC).